Here is a 108-residue protein sequence, read N- to C-terminus: Insertion element IS629 uncharacterized 12 kDa protein S4062 (108 aa).

Belongs to the transposase 8 family.

The sequence is that of Insertion element IS629 uncharacterized 12 kDa protein S4062 from Shigella flexneri.